Here is a 651-residue protein sequence, read N- to C-terminus: Probable potassium transport system protein Kup (651 aa).

12 helical membrane-spanning segments follow: residues Leu41 to Phe61, Val82 to Val102, Leu130 to Pro150, Ile163 to Leu183, Val194 to Leu214, Phe235 to Thr255, Trp276 to Leu296, Met309 to Ala329, Ile366 to Phe386, Ala395 to Met415, Ala426 to Ile446, and Glu450 to Val470.

The protein belongs to the HAK/KUP transporter (TC 2.A.72) family.

The protein localises to the cell inner membrane. It carries out the reaction K(+)(in) + H(+)(in) = K(+)(out) + H(+)(out). In terms of biological role, transport of potassium into the cell. Likely operates as a K(+):H(+) symporter. The sequence is that of Probable potassium transport system protein Kup from Brucella canis (strain ATCC 23365 / NCTC 10854 / RM-666).